A 97-amino-acid polypeptide reads, in one-letter code: Aspartyl/glutamyl-tRNA(Asn/Gln) amidotransferase subunit C (97 aa).

Residues 58–78 are disordered; the sequence is LPQGRLRKDTPRDPLDRENAL. The segment covering 63–77 has biased composition (basic and acidic residues); it reads LRKDTPRDPLDRENA.

It belongs to the GatC family. In terms of assembly, heterotrimer of A, B and C subunits.

The enzyme catalyses L-glutamyl-tRNA(Gln) + L-glutamine + ATP + H2O = L-glutaminyl-tRNA(Gln) + L-glutamate + ADP + phosphate + H(+). The catalysed reaction is L-aspartyl-tRNA(Asn) + L-glutamine + ATP + H2O = L-asparaginyl-tRNA(Asn) + L-glutamate + ADP + phosphate + 2 H(+). Allows the formation of correctly charged Asn-tRNA(Asn) or Gln-tRNA(Gln) through the transamidation of misacylated Asp-tRNA(Asn) or Glu-tRNA(Gln) in organisms which lack either or both of asparaginyl-tRNA or glutaminyl-tRNA synthetases. The reaction takes place in the presence of glutamine and ATP through an activated phospho-Asp-tRNA(Asn) or phospho-Glu-tRNA(Gln). The sequence is that of Aspartyl/glutamyl-tRNA(Asn/Gln) amidotransferase subunit C from Saccharolobus islandicus (strain Y.N.15.51 / Yellowstone #2) (Sulfolobus islandicus).